The chain runs to 411 residues: F-box/kelch-repeat protein At3g61590 (411 aa).

An F-box domain is found at 37 to 83 (FSMDSLLPDDLLERILSFLPIASIFRAGTVCKRWNEIVSSRRFLCNF). Kelch repeat units follow at residues 81 to 135 (CNFS…SSCG), 137 to 178 (VCFM…MSTS), 196 to 246 (SIVK…ICNN), 251 to 299 (MIYS…LMNL), 302 to 350 (RLVI…EFDE), and 352 to 401 (FASS…FTGF).

Part of a SCF (ASK-cullin-F-box) protein ligase complex. Interacts with SKP1A/ASK1, SKP1B/ASK2, ASK3, ASK9, ASK11, ASK12, ASK13, ASK14, ASK16 and ASK18.

It participates in protein modification; protein ubiquitination. Functionally, component of SCF(ASK-cullin-F-box) E3 ubiquitin ligase complexes, which may mediate the ubiquitination and subsequent proteasomal degradation of target proteins. In Arabidopsis thaliana (Mouse-ear cress), this protein is F-box/kelch-repeat protein At3g61590.